Consider the following 466-residue polypeptide: Phosphomethylpyrimidine synthase (466 aa).

Residues asparagine 80, methionine 109, tyrosine 139, histidine 175, 195–197 (SRG), 236–239 (DSLR), and glutamate 275 contribute to the substrate site. Zn(2+) is bound at residue histidine 279. A substrate-binding site is contributed by tyrosine 302. Histidine 343 provides a ligand contact to Zn(2+). [4Fe-4S] cluster-binding residues include cysteine 423, cysteine 426, and cysteine 431.

This sequence belongs to the ThiC family. [4Fe-4S] cluster is required as a cofactor.

The catalysed reaction is 5-amino-1-(5-phospho-beta-D-ribosyl)imidazole + S-adenosyl-L-methionine = 4-amino-2-methyl-5-(phosphooxymethyl)pyrimidine + CO + 5'-deoxyadenosine + formate + L-methionine + 3 H(+). It functions in the pathway cofactor biosynthesis; thiamine diphosphate biosynthesis. Functionally, catalyzes the synthesis of the hydroxymethylpyrimidine phosphate (HMP-P) moiety of thiamine from aminoimidazole ribotide (AIR) in a radical S-adenosyl-L-methionine (SAM)-dependent reaction. The protein is Phosphomethylpyrimidine synthase of Prochlorococcus marinus (strain NATL1A).